A 195-amino-acid polypeptide reads, in one-letter code: ATP-dependent Clp protease proteolytic subunit (195 aa).

Residue serine 99 is the Nucleophile of the active site. Histidine 124 is a catalytic residue.

It belongs to the peptidase S14 family. Fourteen ClpP subunits assemble into 2 heptameric rings which stack back to back to give a disk-like structure with a central cavity, resembling the structure of eukaryotic proteasomes.

Its subcellular location is the cytoplasm. The enzyme catalyses Hydrolysis of proteins to small peptides in the presence of ATP and magnesium. alpha-casein is the usual test substrate. In the absence of ATP, only oligopeptides shorter than five residues are hydrolyzed (such as succinyl-Leu-Tyr-|-NHMec, and Leu-Tyr-Leu-|-Tyr-Trp, in which cleavage of the -Tyr-|-Leu- and -Tyr-|-Trp bonds also occurs).. In terms of biological role, cleaves peptides in various proteins in a process that requires ATP hydrolysis. Has a chymotrypsin-like activity. Plays a major role in the degradation of misfolded proteins. The protein is ATP-dependent Clp protease proteolytic subunit of Caldicellulosiruptor saccharolyticus (strain ATCC 43494 / DSM 8903 / Tp8T 6331).